A 567-amino-acid polypeptide reads, in one-letter code: Urease subunit alpha (567 aa).

The Urease domain occupies Gly129 to Phe567. Residues His134, His136, and Lys217 each contribute to the Ni(2+) site. Lys217 is modified (N6-carboxylysine). Residue His219 participates in substrate binding. The Ni(2+) site is built by His246 and His272. The active-site Proton donor is His320. Asp360 provides a ligand contact to Ni(2+).

The protein belongs to the metallo-dependent hydrolases superfamily. Urease alpha subunit family. In terms of assembly, heterotrimer of UreA (gamma), UreB (beta) and UreC (alpha) subunits. Three heterotrimers associate to form the active enzyme. Ni cation is required as a cofactor. In terms of processing, carboxylation allows a single lysine to coordinate two nickel ions.

It is found in the cytoplasm. It carries out the reaction urea + 2 H2O + H(+) = hydrogencarbonate + 2 NH4(+). The protein operates within nitrogen metabolism; urea degradation; CO(2) and NH(3) from urea (urease route): step 1/1. The polypeptide is Urease subunit alpha (Aliivibrio fischeri (strain MJ11) (Vibrio fischeri)).